A 53-amino-acid polypeptide reads, in one-letter code: Abaecin (53 aa).

The signal sequence occupies residues 1–19; that stretch reads MKVVIFIFALLATICAAFA.

It localises to the secreted. In terms of biological role, this peptide has bactericidal activity. This chain is Abaecin, found in Apis mellifera (Honeybee).